Consider the following 102-residue polypeptide: Small ribosomal subunit protein eS24 (102 aa).

Positions 70–102 (VYDSPAQAAEVEHDHMLERNKIGADDADAEEAE) are disordered. A compositionally biased stretch (basic and acidic residues) spans 79-93 (EVEHDHMLERNKIGA).

It belongs to the eukaryotic ribosomal protein eS24 family.

The polypeptide is Small ribosomal subunit protein eS24 (Halobacterium salinarum (strain ATCC 29341 / DSM 671 / R1)).